We begin with the raw amino-acid sequence, 241 residues long: Phosphatidylcholine synthase (241 aa).

Topologically, residues 1 to 15 are cytoplasmic; sequence MKIFNYKRVPYAEIR. A helical transmembrane segment spans residues 16–36; that stretch reads AFSVHILTASGSFLAFLGVVA. At 37 to 41 the chain is on the periplasmic side; it reads ASEHR. A helical membrane pass occupies residues 42–62; it reads FVDMFWWLGLALLVDGIDGPI. At 63 to 76 the chain is on the cytoplasmic side; the sequence is ARKVRVKEVLPNWS. Residues 77-97 form a helical membrane-spanning segment; it reads GDTLDNIIDYVTYVLLPAFAL. Over 98–100 the chain is Periplasmic; it reads YQS. Residues 101-121 traverse the membrane as a helical segment; it reads GMIGEPLSFVAAGMIVVSSAI. Topologically, residues 122-133 are cytoplasmic; that stretch reads YYADMGMKTDEY. The helical transmembrane segment at 134 to 154 threads the bilayer; sequence FFSGFPVVWNMVVFTLFVMDA. The Periplasmic portion of the chain corresponds to 155–159; it reads SATTA. Residues 160–180 form a helical membrane-spanning segment; that stretch reads MTVVTVSVFLTFLPINFLHPV. At 181 to 187 the chain is on the cytoplasmic side; that stretch reads RVKRLRP. A helical transmembrane segment spans residues 188 to 208; that stretch reads LNLLVVAIWCALGGYALLMHF. Over 209–214 the chain is Periplasmic; it reads ETPTWA. A helical transmembrane segment spans residues 215–235; sequence VIAFVASGIYLYCIGGILQFF. The Cytoplasmic segment spans residues 236 to 241; it reads PSLGAK.

Belongs to the CDP-alcohol phosphatidyltransferase class-I family. Requires Mn(2+) as cofactor.

It localises to the cell inner membrane. The catalysed reaction is a CDP-1,2-diacyl-sn-glycerol + choline = a 1,2-diacyl-sn-glycero-3-phosphocholine + CMP + H(+). Its function is as follows. Condenses choline with CDP-diglyceride to produce phosphatidylcholine and CMP. Affects motility, biofilm formation and virulence of this bacterium when there is a complete loss of phosphatidylcholine formation due to absence of both the synthase (pcs) and the methylation (pmtA) pathways. This chain is Phosphatidylcholine synthase, found in Agrobacterium fabrum (strain C58 / ATCC 33970) (Agrobacterium tumefaciens (strain C58)).